The following is a 408-amino-acid chain: Multidrug resistance protein MdtG (408 aa).

11 consecutive transmembrane segments (helical) span residues 16–36, 58–78, 92–112, 115–135, 146–166, 173–193, 224–244, 256–276, 290–310, 319–339, and 378–398; these read LIVAWLGCFLTGAAFSLVMPF, IVFSITFLFSAIASPFWGGLA, LGMGIVMVLMGLAQNIWQFLI, ALLGLLGGFVPNANALIATQV, TLSTGGVSGALLGPMAGGLLA, PVFFITASVLILCFFVTLFCI, LFVTTLIIQVATGSIAPILTL, VAFISGMIASVPGVAALLSAP, ILITALIFSVLLLIPMSYVQT, FLLGAADGALLPAVQTLLVYN, and AVFLVTAGVVLFNAVYSWNSL.

The protein belongs to the major facilitator superfamily. DHA1 family. MdtG (TC 2.A.1.2.20) subfamily.

It localises to the cell inner membrane. Its function is as follows. Confers resistance to fosfomycin and deoxycholate. This chain is Multidrug resistance protein MdtG, found in Escherichia coli O7:K1 (strain IAI39 / ExPEC).